We begin with the raw amino-acid sequence, 1489 residues long: Chromosome partition protein MukB (1489 aa).

34 to 41 (GGNGAGKS) is an ATP binding site. 7 coiled-coil regions span residues 326–418 (LEAD…QYNQ), 444–472 (LETFQAKEQEATEKLLSLEQKMSVAQTAH), 509–602 (RHLA…QRAP), 780–805 (RAARENRIESLHAEREGLSERFATLS), 835–919 (EAEI…GNQL), 977–1116 (EMLS…AKAG), and 1209–1266 (VEAI…QNVS). The interval 666-783 (PGGSEDSRLN…TVPIFGRAAR (118 aa)) is flexible hinge.

It belongs to the SMC family. MukB subfamily. As to quaternary structure, homodimerization via its hinge domain. Binds to DNA via its C-terminal region. Interacts, and probably forms a ternary complex, with MukE and MukF via its C-terminal region. The complex formation is stimulated by calcium or magnesium. Interacts with tubulin-related protein FtsZ.

The protein localises to the cytoplasm. It localises to the nucleoid. Its function is as follows. Plays a central role in chromosome condensation, segregation and cell cycle progression. Functions as a homodimer, which is essential for chromosome partition. Involved in negative DNA supercoiling in vivo, and by this means organize and compact chromosomes. May achieve or facilitate chromosome segregation by condensation DNA from both sides of a centrally located replisome during cell division. This Citrobacter koseri (strain ATCC BAA-895 / CDC 4225-83 / SGSC4696) protein is Chromosome partition protein MukB.